We begin with the raw amino-acid sequence, 448 residues long: MEIDKELTPKQIVEELNKYIVGQYEAKKAVAVALRNRWRRQKLPEDLRDEVIPKNILMIGPTGVGKTEIARRLANLVKAPFIKVEATKFTEVGYVGRDVESIIRELVDVSFKMVKAEKMEEVREKAKAIAEEKILDYLVPKKPKRYGTLIEEEEESPAREKFREMLKNGQLDDKVVEIDVEEKVSAVVGGVVVPGLEDIESQLKELFSNLGPSKRKKRRLTVKEALKIIENEEAEKLIDMDEVQTLAVKRAENLGIVFIDEIDKVAARGSSKSGPDVSREGVQRDLLPIVEGTVVSTKYGPVKTDHILFIAAGAFHLAKPSDLIPELQGRFPIRVELKALTKDDFVKILTEPKNALIKQYIALMSTEGVELEFTEDAIQEIAQIAEEVNERTENIGARRLHTILERIMEDYSFNAPDLKGQKIVIDSKLVREKLGNVITNEDLTRYIL.

ATP contacts are provided by residues Val-21, 63–68 (GVGKTE), Asp-260, Glu-326, and Arg-398.

Belongs to the ClpX chaperone family. HslU subfamily. A double ring-shaped homohexamer of HslV is capped on each side by a ring-shaped HslU homohexamer. The assembly of the HslU/HslV complex is dependent on binding of ATP.

The protein resides in the cytoplasm. ATPase subunit of a proteasome-like degradation complex; this subunit has chaperone activity. The binding of ATP and its subsequent hydrolysis by HslU are essential for unfolding of protein substrates subsequently hydrolyzed by HslV. HslU recognizes the N-terminal part of its protein substrates and unfolds these before they are guided to HslV for hydrolysis. This chain is ATP-dependent protease ATPase subunit HslU, found in Sulfurihydrogenibium sp. (strain YO3AOP1).